The following is a 917-amino-acid chain: Protein Ami (917 aa).

The N-terminal stretch at M1–A30 is a signal peptide. The N-acetylmuramoyl-L-alanine amidase domain occupies K118–P245. The interval L262–Q917 is GW repeat region, necessary and sufficient for cell surface attachment. 8 consecutive GW domains span residues Y279–T358, M361–Y435, Y440–T519, M522–Y596, Y601–T679, M682–Y756, Y761–T840, and M843–Q917.

In the N-terminal section; belongs to the N-acetylmuramoyl-L-alanine amidase 2 family.

It is found in the cell surface. The protein resides in the cell membrane. Its function is as follows. A bacteriolysin able to lyse both L.monocytogenes and S.aureus. The chain is Protein Ami from Listeria monocytogenes serotype 1/2a (strain EGD / Mackaness).